The sequence spans 379 residues: Cytochrome b (379 aa).

4 consecutive transmembrane segments (helical) span residues 33-53 (FGSL…FLAM), 77-98 (WLIR…YLHI), 113-133 (WNIG…GYVL), and 178-198 (FFAF…IHLL). 2 residues coordinate heme b: H83 and H97. Heme b contacts are provided by H182 and H196. H201 contributes to the a ubiquinone binding site. 4 helical membrane passes run 226 to 246 (YKDL…ALFY), 288 to 308 (LGGV…PILH), 320 to 340 (ASQL…WIGG), and 347 to 367 (YIII…VLNP).

It belongs to the cytochrome b family. As to quaternary structure, the cytochrome bc1 complex contains 3 respiratory subunits (MT-CYB, CYC1 and UQCRFS1), 2 core proteins (UQCRC1 and UQCRC2) and probably 6 low-molecular weight proteins. The cofactor is heme b.

It localises to the mitochondrion inner membrane. In terms of biological role, component of the ubiquinol-cytochrome c reductase complex (complex III or cytochrome b-c1 complex) that is part of the mitochondrial respiratory chain. The b-c1 complex mediates electron transfer from ubiquinol to cytochrome c. Contributes to the generation of a proton gradient across the mitochondrial membrane that is then used for ATP synthesis. The protein is Cytochrome b (mt-cyb) of Anguilla interioris (Highlands long-finned eel).